Consider the following 73-residue polypeptide: UPF0154 protein BCG9842_B1526 (73 aa).

The helical transmembrane segment at 3–23 threads the bilayer; that stretch reads IWLGILVGVVALVAGVALGFF.

It belongs to the UPF0154 family.

The protein resides in the cell membrane. This Bacillus cereus (strain G9842) protein is UPF0154 protein BCG9842_B1526.